Here is a 212-residue protein sequence, read N- to C-terminus: uncharacterized protein (212 aa).

Residues 46–198 (LERVYREKRK…IYSLMTRLGI (153 aa)) enclose the SIS domain.

Belongs to the SIS family. PHI subfamily.

This is an uncharacterized protein from Aeropyrum pernix (strain ATCC 700893 / DSM 11879 / JCM 9820 / NBRC 100138 / K1).